Consider the following 106-residue polypeptide: Iron-sulfur cluster assembly protein CyaY (106 aa).

This sequence belongs to the frataxin family.

In terms of biological role, involved in iron-sulfur (Fe-S) cluster assembly. May act as a regulator of Fe-S biogenesis. This chain is Iron-sulfur cluster assembly protein CyaY, found in Photorhabdus laumondii subsp. laumondii (strain DSM 15139 / CIP 105565 / TT01) (Photorhabdus luminescens subsp. laumondii).